Reading from the N-terminus, the 160-residue chain is Major strawberry allergen Fra a 1.08 (160 aa).

This sequence belongs to the BetVI family. Phosphorylated in vivo. Phosphorylation prevents its activity as ribonuclease. Highly expressed in roots. Expressed a low levels in ripe red fruits.

Functionally, possesses ribonuclease activity in vitro. This Fragaria ananassa (Strawberry) protein is Major strawberry allergen Fra a 1.08.